An 899-amino-acid chain; its full sequence is Protein suppressor of hairy wing (899 aa).

Disordered regions lie at residues 1–33 (MSAQEDALPATPPASSSIKISDGDKPKEKRTGT), 45–127 (AAVA…KKMD), and 171–206 (AKENGEEFVVSGVDEDDDDDDDDEDEGVVEGGAKRR). The segment covering 21 to 31 (SDGDKPKEKRT) has biased composition (basic and acidic residues). The span at 45-55 (AAVASKGASVS) shows a compositional bias: low complexity. Composition is skewed to polar residues over residues 67 to 83 (KILNNNNNDEAQTSTKG) and 102 to 111 (RSSAPASSAV). Acidic residues predominate over residues 183 to 198 (VDEDDDDDDDDEDEGV). The C2H2-type 1; atypical zinc-finger motif lies at 218–240 (HVCGKCYKTFRRVKSLKKHLEFC). The C2H2-type 2 zinc-finger motif lies at 288 to 311 (INCPDCPKSFKTQTSYERHIFITH). The C2H2-type 3; atypical zinc-finger motif lies at 318 to 340 (YPCSICNAKLRSGALLKLHEQQH). 9 consecutive C2H2-type zinc fingers follow at residues 347–365 (FACKICGKDFMCSYHLKCH), 379–401 (MSCKVCDRVFYRLDNLCAHLKQH), 412–434 (YMCHVCKNCFYSLSTLNIHIRTH), 440–462 (FDCDLCDKKFSALVALKKHRRYH), 468–490 (YTCTVCSQSFAVKEVLNRHMKRH), 496–518 (HKCNECGKSFIQATQLRTHSKTH), 522–544 (YACSLCIQKFKTEKQLERHVKDH), 552–576 (FACTECTRSFRTSALLKEHLDAGDH), and 594–617 (TDCAICDKNFDTTETLRNHIRSVH). 3 disordered regions span residues 646–665 (EQKEQEDDVPARNTSAGSLI), 702–734 (PLEGDKATESTAETDIKAESSKEKPSVSPVVKK), and 865–899 (GDEDQDQDQETDKGKDREADNTDTDTREDAVESEA). Positions 874–899 (ETDKGKDREADNTDTDTREDAVESEA) are enriched in basic and acidic residues.

The protein resides in the nucleus. Component of the gypsy chromatin insulator complex which is required for the function of the gypsy chromatin insulator and other endogenous chromatin insulators. Chromatin insulators are regulatory elements which establish independent domains of transcriptional activity within eukaryotic genomes. Insulators have two defining properties; they can block the communication between an enhancer and a promoter when placed between them and can also buffer transgenes from position effect variegation (PEV). Insulators are proposed to structure the chromatin fiber into independent domains of differing transcriptional potential by promoting the formation of distinct chromatin loops. This chromatin looping may involve the formation of insulator bodies, where homotypic interactions between individual subunits of the insulator complex could promote the clustering of widely spaced insulators at the nuclear periphery. Within the gypsy insulator complex, this protein binds specifically to a region of the gypsy element located 3' of the 5' long terminal repeat (LTR), and may also mediate interaction with other endogenous insulators at sites distinct from those recognized by Cp190. Cooperates with pita and cliff to recruit Cp190 and regulate insulator function at the front-ultraabdominal (Fub) boundary. The sequence is that of Protein suppressor of hairy wing (su(Hw)) from Drosophila virilis (Fruit fly).